The following is a 305-amino-acid chain: Methionyl-tRNA formyltransferase (305 aa).

108–111 (SLLP) serves as a coordination point for (6S)-5,6,7,8-tetrahydrofolate.

Belongs to the Fmt family.

The enzyme catalyses L-methionyl-tRNA(fMet) + (6R)-10-formyltetrahydrofolate = N-formyl-L-methionyl-tRNA(fMet) + (6S)-5,6,7,8-tetrahydrofolate + H(+). Attaches a formyl group to the free amino group of methionyl-tRNA(fMet). The formyl group appears to play a dual role in the initiator identity of N-formylmethionyl-tRNA by promoting its recognition by IF2 and preventing the misappropriation of this tRNA by the elongation apparatus. This Clavibacter michiganensis subsp. michiganensis (strain NCPPB 382) protein is Methionyl-tRNA formyltransferase.